Consider the following 196-residue polypeptide: Peptidoglycan recognition protein (196 aa).

The first 23 residues, 1–23 (MARLHSAVVLALALSSLLTEIAA), serve as a signal peptide directing secretion. Disulfide bonds link cysteine 25–cysteine 147 and cysteine 61–cysteine 67. The N-acetylmuramoyl-L-alanine amidase domain maps to 46–173 (RPVSLVIVQH…RQLIASESPG (128 aa)).

It belongs to the N-acetylmuramoyl-L-alanine amidase 2 family. In terms of assembly, monomer. In terms of tissue distribution, constitutively expressed in fat body, epithelial cells and hemocytes. Not detected in Malpighian tubules, silk gland or midgut.

In terms of biological role, binds specifically to peptidoglycan and triggers the propenoloxidase cascade which is an important insect defense mechanism. The chain is Peptidoglycan recognition protein from Bombyx mori (Silk moth).